Here is a 1337-residue protein sequence, read N- to C-terminus: Protein HEG homolog 1 (1337 aa).

An N-terminal signal peptide occupies residues 1-31 (MATPRAPRWPPPSLLLLLLLPLLLLPPAAPG). 2 stretches are compositionally biased toward low complexity: residues 28-40 (AAPG…PSPA) and 54-66 (PGAG…PGVA). Disordered stretches follow at residues 28–149 (AAPG…SNMA), 175–211 (SSLL…GFLE), 235–296 (ASHP…QNPS), 313–675 (VPRT…PSPI), 723–767 (LIPS…TVSL), and 860–909 (EGNR…PQTT). At 32–1204 (ARGSLPSPAH…GLNCGNPYQL (1173 aa)) the chain is on the extracellular side. A compositionally biased stretch (polar residues) spans 118 to 131 (TAQNARMSHSSSEG). Over residues 175–190 (SSLLSLESLPESPSSS) the composition is skewed to low complexity. Polar residues-rich tracts occupy residues 195–206 (RITPSQTESGTS), 247–258 (VLSQKRNSSGQE), 283–296 (IKNG…QNPS), and 340–361 (GITS…NSGL). Over residues 470–480 (RGGGEDSGMGG) the composition is skewed to gly residues. Low complexity-rich tracts occupy residues 486–502 (SSSS…LDSS) and 556–575 (SYSE…DSPS). Composition is skewed to polar residues over residues 576–585 (QAQPKQSSMS) and 592–617 (AQSS…NMPN). Positions 637–675 (PSTQPSPSQPQPFSSALPSTRSPGSTSETTTSSPSPSPI) are enriched in low complexity. Composition is skewed to polar residues over residues 725–742 (PSNQ…QQEK) and 751–763 (SLVS…TKAV). Residues 868 to 884 (PTTQPIPLTTSTTSAGE) are compositionally biased toward low complexity. Residues 885–896 (RTTELGRAEESS) show a composition bias toward basic and acidic residues. Polar residues predominate over residues 897–909 (PSHFLTPSSPQTT). In terms of domain architecture, EGF-like 1 spans 941-979 (PVNSCTVNPCLHDGKCIVDLTGRGYRCVCPPAWQGENCS). 6 disulfides stabilise this stretch: cysteine 945-cysteine 956, cysteine 950-cysteine 967, cysteine 969-cysteine 978, cysteine 985-cysteine 996, cysteine 990-cysteine 1005, and cysteine 1007-cysteine 1018. Residues 981-1019 (DVNECLSSPCPPLATCNNTQGSFTCRCPVGYQLEKGICN) form the EGF-like 2; calcium-binding domain. Residue asparagine 1093 is glycosylated (N-linked (GlcNAc...) asparagine). A helical transmembrane segment spans residues 1205 to 1225 (ITVVIAAAGGGLLLILGVALI). The Cytoplasmic portion of the chain corresponds to 1226 to 1337 (VTCCRKSKND…SDESRRRDYF (112 aa)). Phosphoserine is present on serine 1315.

Interacts with CCM2 and KRIT1; KRIT1 markedly facilitates interaction with CCM2.

It is found in the cell membrane. It localises to the cell junction. In terms of biological role, receptor component of the CCM signaling pathway which is a crucial regulator of heart and vessel formation and integrity. May be acting by stabilizing endothelial cell junctions. The chain is Protein HEG homolog 1 (Heg1) from Mus musculus (Mouse).